A 398-amino-acid chain; its full sequence is Cholinephosphotransferase 1 (398 aa).

The residue at position 2 (Ala-2) is an N-acetylalanine. At 2–62 the chain is on the cytoplasmic side; that stretch reads AAGAGARPAP…LLQWIPLWMA (61 aa). The chain crosses the membrane as a helical span at residues 63-83; it reads PNTITLIGLAINLVTTLVLIF. Residue Asn-64 coordinates CDP-choline. Residues 84–93 are Lumenal-facing; it reads YCPTVTEEAP. Residues 94–118 traverse the membrane as a helical segment; the sequence is YWTYLLCALGLFIYQSLDAIDGKQA. Mg(2+) is bound by residues Asp-111 and Asp-114. Residue Arg-119 participates in CDP-choline binding. Over 119–125 the chain is Cytoplasmic; sequence RRTNSCS. Residues 126–150 traverse the membrane as a helical segment; sequence PLGELFDHGCDSLSTVFMAIGASIA. Position 132 (Asp-132) interacts with Mg(2+). Residue His-133 is the Proton acceptor of the active site. Mg(2+) is bound at residue Asp-136. At 151-160 the chain is on the lumenal side; that stretch reads VRLGTHPDWL. The chain crosses the membrane as a helical span at residues 161 to 179; the sequence is FFCSFVGMFMFYCAHWQTY. At 180 to 190 the chain is on the cytoplasmic side; the sequence is VSGVLRFGRVD. The chain crosses the membrane as a helical span at residues 191–207; that stretch reads VTEIQVALVIVFMLSTF. Residues 208–222 are Lumenal-facing; sequence GGATMWDYTIPILEI. A helical membrane pass occupies residues 223 to 248; the sequence is KLKIVPVLGVVGGLIFSCSNYFHVIL. Topologically, residues 249–265 are cytoplasmic; it reads HGGVGKNGSTIAGTSVL. The chain crosses the membrane as a helical span at residues 266–281; the sequence is SPGLHIGLIIILAIMI. The Lumenal portion of the chain corresponds to 282-293; it reads YKKSATNMFEKH. The chain crosses the membrane as a helical span at residues 294–316; sequence PCLYTLMFGCVFAKVAQKLVIAH. The Cytoplasmic portion of the chain corresponds to 317-329; that stretch reads MTKSELYLQDTVF. The helical transmembrane segment at 330–339 threads the bilayer; that stretch reads IGPGLLFLDQ. The Lumenal segment spans residues 340–346; it reads YFNNFID. Residues 347-376 traverse the membrane as a helical segment; the sequence is EYVVLWIAMVISSFDMMIYFTSLCLQISRH. Topologically, residues 377–398 are cytoplasmic; it reads LHLNIFKTSCQQAPEQVYKHID.

The protein belongs to the CDP-alcohol phosphatidyltransferase class-I family. The cofactor is Mg(2+). Mn(2+) serves as cofactor. Expressed in brain, heart, lung, liver, spleen, intestine and muscle. Down-regulated in kidney of type 2 diabetic KK/Ta mice.

Its subcellular location is the golgi apparatus membrane. The catalysed reaction is CDP-choline + a 1,2-diacyl-sn-glycerol = a 1,2-diacyl-sn-glycero-3-phosphocholine + CMP + H(+). The enzyme catalyses 1-octadecanoyl-2-(5Z,8Z,11Z,14Z-eicosatetraenoyl)-sn-glycerol + CDP-choline = 1-octadecanoyl-2-(5Z,8Z,11Z,14Z-eicosatetraenoyl)-sn-glycero-3-phosphocholine + CMP + H(+). It catalyses the reaction 1-hexadecanoyl-2-(9Z-octadecenoyl)-sn-glycerol + CDP-choline = 1-hexadecanoyl-2-(9Z-octadecenoyl)-sn-glycero-3-phosphocholine + CMP + H(+). It carries out the reaction 1-hexadecanoyl-2-(4Z,7Z,10Z,13Z,16Z,19Z-docosahexaenoyl)-sn-glycerol + CDP-choline = 1-hexadecanoyl-2-(4Z,7Z,10Z,13Z,16Z,19Z-docosahexaenoyl)-sn-glycero-3-phosphocholine + CMP + H(+). The catalysed reaction is 1,2-dioctanoyl-sn-glycerol + CDP-choline = 1,2-dioctanoyl-sn-glycero-3-phosphocholine + CMP + H(+). It participates in phospholipid metabolism; phosphatidylcholine biosynthesis; phosphatidylcholine from phosphocholine: step 2/2. Catalyzes the final step of de novo phosphatidylcholine (PC) synthesis, i.e. the transfer of choline phosphate from CDP-choline to the free hydroxyl of a diacylglycerol (DAG), producing a PC. It thereby plays a central role in the formation and maintenance of vesicular membranes. The protein is Cholinephosphotransferase 1 of Mus musculus (Mouse).